A 501-amino-acid chain; its full sequence is NAD(P)H-quinone oxidoreductase chain 4, chloroplastic (501 aa).

The next 14 membrane-spanning stretches (helical) occupy residues 4–24 (FPWL…ILFL), 35–55 (YTIC…CYHF), 84–104 (GLSI…TLAA), 111–129 (SRLL…IGSF), 134–154 (LLLF…LLSM), 168–188 (FILY…GMDL), 209–229 (ALEI…SPII), 243–263 (HYST…YGLI), 273–293 (AHSI…IYAA), 306–326 (IAYS…SITD), 331–351 (GAIL…FLAG), 387–407 (LALP…GIIT), 417–437 (ILIT…SLSM), and 463–483 (LFVS…PDFV).

It belongs to the complex I subunit 4 family.

It is found in the plastid. The protein resides in the chloroplast thylakoid membrane. The catalysed reaction is a plastoquinone + NADH + (n+1) H(+)(in) = a plastoquinol + NAD(+) + n H(+)(out). It catalyses the reaction a plastoquinone + NADPH + (n+1) H(+)(in) = a plastoquinol + NADP(+) + n H(+)(out). The polypeptide is NAD(P)H-quinone oxidoreductase chain 4, chloroplastic (Buxus microphylla (Littleleaf boxwood)).